Consider the following 207-residue polypeptide: Large ribosomal subunit protein uL4 (207 aa).

The tract at residues 45–89 is disordered; that stretch reads RQGTHKVKTRSEVRGGGRKPWRQKGTGRARQGSIRSPQWRGGGTV. The span at 60–71 shows a compositional bias: basic residues; sequence GGRKPWRQKGTG.

Belongs to the universal ribosomal protein uL4 family. In terms of assembly, part of the 50S ribosomal subunit.

One of the primary rRNA binding proteins, this protein initially binds near the 5'-end of the 23S rRNA. It is important during the early stages of 50S assembly. It makes multiple contacts with different domains of the 23S rRNA in the assembled 50S subunit and ribosome. In terms of biological role, forms part of the polypeptide exit tunnel. This is Large ribosomal subunit protein uL4 from Bacillus anthracis (strain A0248).